A 932-amino-acid chain; its full sequence is ER degradation-enhancing alpha-mannosidase-like protein 3 (932 aa).

The first 41 residues, Met-1 to Ala-41, serve as a signal peptide directing secretion. N-linked (GlcNAc...) asparagine glycosylation occurs at Asn-118. The Proton donor role is filled by Glu-146. An N-linked (GlcNAc...) asparagine glycan is attached at Asn-195. Asp-293 is an active-site residue. Glu-387 functions as the Proton donor in the catalytic mechanism. Residue Glu-405 is part of the active site. Thr-491 lines the Ca(2+) pocket. N-linked (GlcNAc...) asparagine glycosylation is found at Asn-504 and Asn-511. The PA domain maps to Leu-674–Ile-779. Basic and acidic residues predominate over residues Ser-790–Glu-799. A disordered region spans residues Ser-790–Gln-908. Asn-810 and Asn-814 each carry an N-linked (GlcNAc...) asparagine glycan. The span at Ser-812–Gln-825 shows a compositional bias: low complexity. Over residues Ala-856–Gln-890 the composition is skewed to polar residues. A glycan (N-linked (GlcNAc...) asparagine) is linked at Asn-900. A Prevents secretion from ER motif is present at residues Lys-929–Leu-932.

The protein belongs to the glycosyl hydrolase 47 family. The cofactor is Ca(2+).

It is found in the endoplasmic reticulum lumen. It catalyses the reaction N(4)-(alpha-D-Man-(1-&gt;2)-alpha-D-Man-(1-&gt;2)-alpha-D-Man-(1-&gt;3)-[alpha-D-Man-(1-&gt;2)-alpha-D-Man-(1-&gt;3)-[alpha-D-Man-(1-&gt;2)-alpha-D-Man-(1-&gt;6)]-alpha-D-Man-(1-&gt;6)]-beta-D-Man-(1-&gt;4)-beta-D-GlcNAc-(1-&gt;4)-beta-D-GlcNAc)-L-asparaginyl-[protein] (N-glucan mannose isomer 9A1,2,3B1,2,3) + 4 H2O = N(4)-(alpha-D-Man-(1-&gt;3)-[alpha-D-Man-(1-&gt;3)-[alpha-D-Man-(1-&gt;6)]-alpha-D-Man-(1-&gt;6)]-beta-D-Man-(1-&gt;4)-beta-D-GlcNAc-(1-&gt;4)-beta-D-GlcNAc)-L-asparaginyl-[protein] (N-glucan mannose isomer 5A1,2) + 4 beta-D-mannose. The catalysed reaction is N(4)-(alpha-D-Man-(1-&gt;2)-alpha-D-Man-(1-&gt;2)-alpha-D-Man-(1-&gt;3)-[alpha-D-Man-(1-&gt;3)-[alpha-D-Man-(1-&gt;2)-alpha-D-Man-(1-&gt;6)]-alpha-D-Man-(1-&gt;6)]-beta-D-Man-(1-&gt;4)-beta-D-GlcNAc-(1-&gt;4)-beta-D-GlcNAc)-L-asparaginyl-[protein] (N-glucan mannose isomer 8A1,2,3B1,3) + 3 H2O = N(4)-(alpha-D-Man-(1-&gt;3)-[alpha-D-Man-(1-&gt;3)-[alpha-D-Man-(1-&gt;6)]-alpha-D-Man-(1-&gt;6)]-beta-D-Man-(1-&gt;4)-beta-D-GlcNAc-(1-&gt;4)-beta-D-GlcNAc)-L-asparaginyl-[protein] (N-glucan mannose isomer 5A1,2) + 3 beta-D-mannose. The protein operates within protein modification; protein glycosylation. Involved in endoplasmic reticulum-associated degradation (ERAD). Accelerates the glycoprotein ERAD by proteasomes, by catalyzing mannose trimming from Man8GlcNAc2 to Man7GlcNAc2 in the N-glycans. May also participate in mannose trimming from all glycoproteins and not just misfolded ones targeted to ERAD. May have alpha 1,2-mannosidase activity. The chain is ER degradation-enhancing alpha-mannosidase-like protein 3 (EDEM3) from Homo sapiens (Human).